Consider the following 340-residue polypeptide: MPKPHDNDHMPFPVLVGDIGGTNARFWILMDAHAAPKEFANIHTADFPTIDQAIQDCILDKSGFQPRSAILAVAGPIKDDEIPLTNCPWVIRPKAMIADLGFDDVLVVNDFEAQALAAASLGRNDREPIGPLTETSLNSRVILGPGTGLGVGGLLYTHHTWFPVPGEGGHVDIGPRSDRDWQIFPHIERIEGRISGEQILCGRGILHLYNAICAADGIEPVWTDPADVTQHALKGNDPVCVETMTLFVTYLGRIAGDMALVFMARGGVFLSGGISQKIIPLLKSPVFRAAFEDKAPHTEMMKTIPTFVAIHPQAALSGLAAYARTPSSYGVKHEGRRWQR.

17 to 22 (GDIGGT) provides a ligand contact to ATP.

It belongs to the bacterial glucokinase family.

It is found in the cytoplasm. The catalysed reaction is D-glucose + ATP = D-glucose 6-phosphate + ADP + H(+). The protein is Glucokinase of Allorhizobium ampelinum (strain ATCC BAA-846 / DSM 112012 / S4) (Agrobacterium vitis (strain S4)).